A 419-amino-acid chain; its full sequence is Putative zinc metalloprotease SP_0263 (419 aa).

His18 contributes to the Zn(2+) binding site. The active site involves Glu19. A Zn(2+)-binding site is contributed by His22. Helical transmembrane passes span 169-191 (LITNFAGPMNNFILGVVVFWVLI), 345-367 (ILYFLAMISINIGIFNLIPIPAL), and 388-410 (EIETYVTLAGVVIMVVLMIAVTW).

This sequence belongs to the peptidase M50B family. The cofactor is Zn(2+).

The protein localises to the cell membrane. This Streptococcus pneumoniae serotype 4 (strain ATCC BAA-334 / TIGR4) protein is Putative zinc metalloprotease SP_0263.